Consider the following 63-residue polypeptide: Large ribosomal subunit protein uL29 (63 aa).

Belongs to the universal ribosomal protein uL29 family.

In Pectobacterium atrosepticum (strain SCRI 1043 / ATCC BAA-672) (Erwinia carotovora subsp. atroseptica), this protein is Large ribosomal subunit protein uL29.